The chain runs to 534 residues: Envelope glycoprotein (534 aa).

A signal peptide spans methionine 1 to alanine 34. Topologically, residues asparagine 35 to leucine 534 are extracellular. Residues asparagine 43 and asparagine 58 are each glycosylated (N-linked (GlcNAc...) asparagine; by host). Intrachain disulfides connect cysteine 115-cysteine 132 and cysteine 124-cysteine 137. Residues alanine 245–threonine 279 form a disordered region. The segment covering proline 258–glutamine 274 has biased composition (polar residues). Residues asparagine 286, asparagine 322, and asparagine 327 are each glycosylated (N-linked (GlcNAc...) asparagine; by host). The short motif at cysteine 332–cysteine 335 is the CXXC element. Asparagine 351, asparagine 354, and asparagine 430 each carry an N-linked (GlcNAc...) asparagine; by host glycan. A fusion peptide region spans residues isoleucine 468–valine 488. The stretch at leucine 496 to leucine 534 forms a coiled coil.

The mature envelope protein (Env) consists of a trimer of SU-TM heterodimers attached by noncovalent interactions or by a labile interchain disulfide bond. Specific enzymatic cleavages in vivo yield mature proteins. Envelope glycoproteins are synthesized as an inactive precursor that is N-glycosylated and processed likely by host cell furin or by a furin-like protease in the Golgi to yield the mature SU and TM proteins. The cleavage site between SU and TM requires the minimal sequence [KR]-X-[KR]-R.

The protein localises to the virion membrane. It localises to the host cell membrane. In terms of biological role, the surface protein (SU) attaches the virus to the host cell by binding to its receptor. This interaction triggers the refolding of the transmembrane protein (TM) and is thought to activate its fusogenic potential by unmasking its fusion peptide. Fusion occurs at the host cell plasma membrane. The transmembrane protein (TM) acts as a class I viral fusion protein. Under the current model, the protein has at least 3 conformational states: pre-fusion native state, pre-hairpin intermediate state, and post-fusion hairpin state. During viral and target cell membrane fusion, the coiled coil regions (heptad repeats) assume a trimer-of-hairpins structure, positioning the fusion peptide in close proximity to the C-terminal region of the ectodomain. The formation of this structure appears to drive apposition and subsequent fusion of viral and target cell membranes. Membranes fusion leads to delivery of the nucleocapsid into the cytoplasm. The polypeptide is Envelope glycoprotein (env) (Feline sarcoma virus (strain Snyder-Theilen)).